A 138-amino-acid chain; its full sequence is Microneme antigen L2 (138 aa).

PAN domains follow at residues 9–78 and 82–138; these read CFAH…PRSC and CSDA…SKRA. 6 disulfides stabilise this stretch: Cys-9–Cys-78, Cys-34–Cys-56, Cys-38–Cys-44, Cys-82–Cys-86, Cys-107–Cys-127, and Cys-111–Cys-117. Ser-18 serves as a coordination point for a carbohydrate. Positions 59, 66, and 71 each coordinate a carbohydrate.

Homodimer or heterodimer. Post-translationally, contains six disulfide bonds.

It localises to the cytoplasmic vesicle. Its subcellular location is the secretory vesicle. The protein localises to the microneme. In terms of biological role, galactose-binding lectin. Plays a role in adhesion to the host cell. Has a potential role in invasion of host cells. The sequence is that of Microneme antigen L2 from Sarcocystis muris.